A 426-amino-acid polypeptide reads, in one-letter code: Histidinol dehydrogenase (426 aa).

NAD(+) contacts are provided by Y126, Q188, and N210. The substrate site is built by S233, Q255, and H258. Zn(2+) contacts are provided by Q255 and H258. Active-site proton acceptor residues include E323 and H324. Substrate is bound by residues H324, D357, E411, and H416. Zn(2+) is bound at residue D357. H416 serves as a coordination point for Zn(2+).

This sequence belongs to the histidinol dehydrogenase family. The cofactor is Zn(2+).

It catalyses the reaction L-histidinol + 2 NAD(+) + H2O = L-histidine + 2 NADH + 3 H(+). Its pathway is amino-acid biosynthesis; L-histidine biosynthesis; L-histidine from 5-phospho-alpha-D-ribose 1-diphosphate: step 9/9. Its function is as follows. Catalyzes the sequential NAD-dependent oxidations of L-histidinol to L-histidinaldehyde and then to L-histidine. This is Histidinol dehydrogenase from Heliobacterium mobile (Heliobacillus mobilis).